A 32-amino-acid polypeptide reads, in one-letter code: Photosystem I reaction center subunit XII (32 aa).

The helical transmembrane segment at 10-27 (VVALISALVTGILALRLG) threads the bilayer.

It belongs to the PsaM family.

Its subcellular location is the plastid. It is found in the chloroplast thylakoid membrane. The protein is Photosystem I reaction center subunit XII of Zygnema circumcarinatum (Green alga).